Here is a 150-residue protein sequence, read N- to C-terminus: Transcriptional regulator MraZ (150 aa).

SpoVT-AbrB domains are found at residues Val-5 to Glu-51 and Ala-80 to Thr-123.

The protein belongs to the MraZ family. Forms oligomers.

It is found in the cytoplasm. The protein resides in the nucleoid. This chain is Transcriptional regulator MraZ, found in Thioalkalivibrio sulfidiphilus (strain HL-EbGR7).